Reading from the N-terminus, the 144-residue chain is L-fucose mutarotase (144 aa).

Catalysis depends on histidine 22, which acts as the Proton donor. Substrate is bound by residues aspartate 30, arginine 109, and 131–133 (YGN).

It belongs to the RbsD / FucU family. FucU mutarotase subfamily. As to quaternary structure, homodecamer.

The protein resides in the cytoplasm. It carries out the reaction alpha-L-fucose = beta-L-fucose. It functions in the pathway carbohydrate metabolism; L-fucose metabolism. In terms of biological role, involved in the anomeric conversion of L-fucose. The chain is L-fucose mutarotase from Haemophilus influenzae (strain 86-028NP).